Reading from the N-terminus, the 174-residue chain is Shikimate kinase 2 (174 aa).

12 to 17 serves as a coordination point for ATP; that stretch reads GCGKTT. Positions 16 and 32 each coordinate Mg(2+). Substrate contacts are provided by Asp-34, Arg-58, and Gly-79. Positions 112 to 126 are LID domain; sequence QAAPEEDLRPTLTGK. Arg-120 serves as a coordination point for ATP. Arg-139 provides a ligand contact to substrate.

It belongs to the shikimate kinase family. AroL subfamily. As to quaternary structure, monomer. Mg(2+) serves as cofactor.

The protein localises to the cytoplasm. The enzyme catalyses shikimate + ATP = 3-phosphoshikimate + ADP + H(+). It functions in the pathway metabolic intermediate biosynthesis; chorismate biosynthesis; chorismate from D-erythrose 4-phosphate and phosphoenolpyruvate: step 5/7. In terms of biological role, catalyzes the specific phosphorylation of the 3-hydroxyl group of shikimic acid using ATP as a cosubstrate. This Escherichia coli O7:K1 (strain IAI39 / ExPEC) protein is Shikimate kinase 2.